The sequence spans 1116 residues: Disease resistance protein RGA5 (1116 aa).

Positions 1–177 (MDAPASFSLG…HHGVSANLVG (177 aa)) are structured coiled coil (CC) domain. In terms of domain architecture, NB-ARC spans 182–466 (KTKLNRWLSD…WSAEGFVSAN (285 aa)). LRR repeat units lie at residues 608 to 631 (LFQLRYLKTSGDVVVQLPAQISGL), 633 to 653 (YLETLEIDARVSAVPFDLVHL), 654 to 675 (PNLLHLQLQDETKLPDGIGCMR), 677 to 701 (LRTLQYFDLGNNSVDNLRGLGELTN), 732 to 755 (LSNLKSLILSPGAISMVIFFDISS), 786 to 808 (LHKLCILKVSVRELLTTDIDNLT), 810 to 830 (LPSLTVLSLYAQTAPEGRFIF), 835 to 857 (LPVLKYFKFGCGELCLAFMAGAM), and 858 to 882 (PNLQRLKLVFNIRKSEKYRHTLFGI). The disordered stretch occupies residues 935–971 (EEESHPLEKQHHKREKGSSAGHGVLEKESVEDSEKNT). Residues 958–971 (VLEKESVEDSEKNT) show a composition bias toward basic and acidic residues. The region spanning 997 to 1066 (RTKIVVKVHM…KCGLAELLMV (70 aa)) is the HMA domain. An HMA-like domain region spans residues 1000–1070 (IVVKVHMPCG…AELLMVELVE (71 aa)).

It belongs to the disease resistance NB-LRR family. Forms homodimer or heterodimer with RGA4 through its coiled coil (CC) domain. Interacts with AVR1-Pia and AVR-CO39 through its C-terminal part containing the HMA-like domain. In terms of tissue distribution, expressed in leaves.

Its subcellular location is the cytoplasm. In terms of biological role, disease resistance (R) protein that recognizes the AVR-Pia and AVR1-CO39 effector avirulence proteins from M.oryzae. Resistance proteins guard the plant against pathogens that contain an appropriate avirulence protein via an indirect interaction with this avirulence protein. That triggers a defense system including the hypersensitive response, which restricts the pathogen growth. Contribution of RGA4 is required to recognize the effector avirulence proteins AVR-Pia and AVR1-CO39 from M.oryzae. Acts as a repressor of the RGA4-mediated cell death activation. Upon infection, recognition and binding of the AVR effectors relieve the RGA5-mediated repression and triggers the hypersensitive response. Immune response triggered by the RGA4-RGA5 -mediated recognition of AVR1-CO39 confers resistance to X.oryzae pathovars. This is Disease resistance protein RGA5 from Oryza sativa subsp. japonica (Rice).